A 177-amino-acid chain; its full sequence is Chorismate pyruvate-lyase (177 aa).

Substrate-binding residues include Met-37, Arg-79, Leu-117, and Glu-159.

Belongs to the UbiC family. As to quaternary structure, monomer.

The protein localises to the cytoplasm. It carries out the reaction chorismate = 4-hydroxybenzoate + pyruvate. The protein operates within cofactor biosynthesis; ubiquinone biosynthesis. In terms of biological role, removes the pyruvyl group from chorismate, with concomitant aromatization of the ring, to provide 4-hydroxybenzoate (4HB) for the ubiquinone pathway. This chain is Chorismate pyruvate-lyase, found in Sodalis glossinidius (strain morsitans).